The sequence spans 376 residues: MDGEEQQPPHEANVEPVVPSEASEPVPRVLSGDPQNLSDVDAFNLLLEMKLKRRRQRPNLPRTVTQLVAEDGSRVYVVGTAHFSDDSKRDVVKTIREVQPDVVVVELCQYRVSMLKMDESTLLREAQELSLEKLQQAVRQNGLMSGLMQMLLLKVSAHITEQLGMAPGGEFREAFKEASKVPFCKFHLGDRPIPVTFKRAIAALSFWQKVRLAWGLCFLSDPISKDDVERCKQKDLLEQMMAEMIGEFPDLHRTIVSERDVYLTYMLRQAARRLELPRASDAEPRKCVPSVVVGVVGMGHVPGIEKNWSTDLNIQEIMTVPPPSVSGRVSRLAVKAAFFGLLGYSLYWMGRRTASLVLSLPAAQYCLQRVTEARHK.

At methionine 1 the chain carries N-acetylmethionine. The interval 1 to 34 (MDGEEQQPPHEANVEPVVPSEASEPVPRVLSGDP) is disordered. Residues 14-27 (VEPVVPSEASEPVP) show a composition bias toward low complexity. Threonine 65 carries the post-translational modification Phosphothreonine.

The chain is TraB domain-containing protein (TRABD) from Homo sapiens (Human).